The sequence spans 145 residues: UPF0763 protein CFF8240_1572 (145 aa).

The protein belongs to the UPF0763 family.

The polypeptide is UPF0763 protein CFF8240_1572 (Campylobacter fetus subsp. fetus (strain 82-40)).